The following is a 443-amino-acid chain: Xaa-Pro dipeptidase (443 aa).

Mn(2+)-binding residues include aspartate 246, aspartate 257, histidine 339, glutamate 384, and glutamate 423.

The protein belongs to the peptidase M24B family. Bacterial-type prolidase subfamily. Requires Mn(2+) as cofactor.

The enzyme catalyses Xaa-L-Pro dipeptide + H2O = an L-alpha-amino acid + L-proline. Splits dipeptides with a prolyl residue in the C-terminal position. The chain is Xaa-Pro dipeptidase from Salmonella choleraesuis (strain SC-B67).